A 1328-amino-acid chain; its full sequence is DNA-directed RNA polymerase subunit beta (1328 aa).

Belongs to the RNA polymerase beta chain family. The RNAP catalytic core consists of 2 alpha, 1 beta, 1 beta' and 1 omega subunit. When a sigma factor is associated with the core the holoenzyme is formed, which can initiate transcription.

It catalyses the reaction RNA(n) + a ribonucleoside 5'-triphosphate = RNA(n+1) + diphosphate. DNA-dependent RNA polymerase catalyzes the transcription of DNA into RNA using the four ribonucleoside triphosphates as substrates. This Karelsulcia muelleri (strain GWSS) (Sulcia muelleri) protein is DNA-directed RNA polymerase subunit beta.